Reading from the N-terminus, the 50-residue chain is Protein PsbN (50 aa).

Residues 14-34 (VAVTILAVLLALTGFGLWTAF) traverse the membrane as a helical segment.

This sequence belongs to the PsbN family.

Its subcellular location is the cellular thylakoid membrane. In terms of biological role, may play a role in photosystem I and II biogenesis. This is Protein PsbN from Prochlorococcus marinus (strain MIT 9515).